The following is a 158-amino-acid chain: Transcription elongation factor GreA (158 aa).

The stretch at 53–73 (EQQSFVEGRIQEIEGKLSNAQ) forms a coiled coil.

The protein belongs to the GreA/GreB family.

Necessary for efficient RNA polymerase transcription elongation past template-encoded arresting sites. The arresting sites in DNA have the property of trapping a certain fraction of elongating RNA polymerases that pass through, resulting in locked ternary complexes. Cleavage of the nascent transcript by cleavage factors such as GreA or GreB allows the resumption of elongation from the new 3'terminus. GreA releases sequences of 2 to 3 nucleotides. The protein is Transcription elongation factor GreA of Alkalilimnicola ehrlichii (strain ATCC BAA-1101 / DSM 17681 / MLHE-1).